The sequence spans 460 residues: Protein unc-93 homolog A (460 aa).

5 helical membrane-spanning segments follow: residues 7 to 27 (ILIV…LQSL), 41 to 61 (SLSV…PIVI), 68 to 88 (WTIV…FYAS), 89 to 109 (WYTL…LWAA), and 139 to 159 (LFFL…SLIF). Asparagine 168 and asparagine 189 each carry an N-linked (GlcNAc...) asparagine glycan. 6 consecutive transmembrane segments (helical) span residues 203 to 223 (TLLG…AVFL), 292 to 312 (FVGY…LLFG), 321 to 341 (ICLF…LLLW), 345 to 365 (PNDF…DAIW), 390 to 410 (LWES…CVSV), and 412 to 432 (LYIL…VEYL).

This sequence belongs to the unc-93 family.

The protein resides in the membrane. This chain is Protein unc-93 homolog A (unc93a), found in Xenopus laevis (African clawed frog).